A 329-amino-acid polypeptide reads, in one-letter code: 4-hydroxythreonine-4-phosphate dehydrogenase (329 aa).

2 residues coordinate substrate: histidine 136 and threonine 137. Positions 166, 211, and 266 each coordinate a divalent metal cation. 3 residues coordinate substrate: lysine 274, asparagine 283, and arginine 292.

This sequence belongs to the PdxA family. Homodimer. Zn(2+) is required as a cofactor. Requires Mg(2+) as cofactor. The cofactor is Co(2+).

It localises to the cytoplasm. The enzyme catalyses 4-(phosphooxy)-L-threonine + NAD(+) = 3-amino-2-oxopropyl phosphate + CO2 + NADH. The protein operates within cofactor biosynthesis; pyridoxine 5'-phosphate biosynthesis; pyridoxine 5'-phosphate from D-erythrose 4-phosphate: step 4/5. In terms of biological role, catalyzes the NAD(P)-dependent oxidation of 4-(phosphooxy)-L-threonine (HTP) into 2-amino-3-oxo-4-(phosphooxy)butyric acid which spontaneously decarboxylates to form 3-amino-2-oxopropyl phosphate (AHAP). This Shigella boydii serotype 4 (strain Sb227) protein is 4-hydroxythreonine-4-phosphate dehydrogenase.